Here is a 272-residue protein sequence, read N- to C-terminus: Cell wall synthesis protein Wag31 (272 aa).

2 disordered regions span residues 1 to 22 (MPLT…GKRG) and 62 to 109 (AARS…SEDT). Residues 30-67 (AFLDLVENELTRLIEENADLRQRVAELDQELAAARSGA) adopt a coiled-coil conformation. Composition is skewed to low complexity over residues 62–76 (AARS…ATSS) and 94–105 (VYEAPAQPAAPQ). Residue Thr-74 is modified to Phosphothreonine. The stretch at 139-206 (LSDARAQAEA…AERKHSEIMG (68 aa)) forms a coiled coil. The interval 243-272 (ELGQRGSAAPVDSSANSDASGFGQFNRGNN) is disordered.

It belongs to the DivIVA family. As to quaternary structure, forms homooligomers. Interacts with PbpB and CwsA. Post-translationally, phosphorylated by PknA.

It localises to the cytoplasm. In terms of biological role, important for maintaining cell shape and cell wall integrity by localizing peptidoglycan synthesis to the cell poles. Protects PbpB (PBP3, FtsI) from oxidative stress-induced cleavage. In Mycolicibacterium smegmatis (strain ATCC 700084 / mc(2)155) (Mycobacterium smegmatis), this protein is Cell wall synthesis protein Wag31 (wag31).